Consider the following 62-residue polypeptide: Metallothionein (62 aa).

The residue at position 1 (Met-1) is an N-acetylmethionine. The interval 1–30 is beta; sequence MDPQDCKCETGASCSCGTTCSCSNCKCTSC. Positions 6, 8, 14, 16, 20, 22, 25, 27, 30, 34, 35, 37, 38, 42, 45, 49, 51, 58, 60, and 61 each coordinate a divalent metal cation. The segment at 31–62 is alpha; it reads KKSCCSCCPAECSKCSQGCHCEKGSKKCSCCN.

The protein belongs to the metallothionein superfamily. Type 1 family.

Metallothioneins have a high content of cysteine residues that bind various heavy metals. The chain is Metallothionein (mt-a) from Xenopus laevis (African clawed frog).